Consider the following 135-residue polypeptide: MLKTLPPTIREKKRYISFKIIYNNELSGGEVVNLIRSSLINYYGVWGSSKCNPWLIDYTHPKGLLRITREEVDFVKSALISINEYKKNPINIIILGVSGTIKKSREKFLKVPHEKYYKVIQRRKKENSYKNRLRK.

This sequence belongs to the eukaryotic/archaeal RNase P protein component 2 family. Consists of a catalytic RNA component and at least 4-5 protein subunits.

It localises to the cytoplasm. The enzyme catalyses Endonucleolytic cleavage of RNA, removing 5'-extranucleotides from tRNA precursor.. Part of ribonuclease P, a protein complex that generates mature tRNA molecules by cleaving their 5'-ends. This Methanococcus aeolicus (strain ATCC BAA-1280 / DSM 17508 / OCM 812 / Nankai-3) protein is Ribonuclease P protein component 2.